Reading from the N-terminus, the 435-residue chain is Serine--tRNA ligase (435 aa).

An L-serine-binding site is contributed by 233-235 (TAE). 264–266 (RAE) provides a ligand contact to ATP. Position 287 (E287) interacts with L-serine. 351-354 (EISS) lines the ATP pocket. S386 contributes to the L-serine binding site.

It belongs to the class-II aminoacyl-tRNA synthetase family. Type-1 seryl-tRNA synthetase subfamily. As to quaternary structure, homodimer. The tRNA molecule binds across the dimer.

The protein localises to the cytoplasm. It carries out the reaction tRNA(Ser) + L-serine + ATP = L-seryl-tRNA(Ser) + AMP + diphosphate + H(+). It catalyses the reaction tRNA(Sec) + L-serine + ATP = L-seryl-tRNA(Sec) + AMP + diphosphate + H(+). It functions in the pathway aminoacyl-tRNA biosynthesis; selenocysteinyl-tRNA(Sec) biosynthesis; L-seryl-tRNA(Sec) from L-serine and tRNA(Sec): step 1/1. Catalyzes the attachment of serine to tRNA(Ser). Is also able to aminoacylate tRNA(Sec) with serine, to form the misacylated tRNA L-seryl-tRNA(Sec), which will be further converted into selenocysteinyl-tRNA(Sec). This chain is Serine--tRNA ligase, found in Anaeromyxobacter sp. (strain K).